The following is a 599-amino-acid chain: Omega-hydroxyceramide transacylase (599 aa).

The region spanning 16–185 is the PNPLA domain; the sequence is ISFSGSGFLS…TSMQPCSFWT (170 aa). A GXSXG motif is present at residues 51-55; the sequence is GTSAG. Ser53 functions as the Nucleophile in the catalytic mechanism. Residue Asp172 is the Proton acceptor of the active site. A DGA/G motif is present at residues 172–174; that stretch reads DGG. The disordered stretch occupies residues 289 to 563; sequence PPPPSLQNLP…PASKLKSAPC (275 aa). Polar residues-rich tracts occupy residues 325–335 and 350–362; these read SSAAPSVQTPE and VSIS…SPLS. The span at 443–454 shows a compositional bias: low complexity; that stretch reads SPESPRLLLRSS. Residues 468–478 show a composition bias toward pro residues; the sequence is PLSPSTPPAGP. Residues 490–501 are compositionally biased toward polar residues; it reads ATGSPALSQLTG. The segment covering 551–563 has biased composition (low complexity); it reads SKKPASKLKSAPC.

As to expression, specifically expressed in skin by keratinocytes, at the boundary area between the nucleated stratum granulosum and the denucleated stratum corneum in the epidermis (at protein level). Also expressed in stomach and other surface lining tissues like intestine and tongue. Also detected in testis as well as in other tissues but at very low level.

It is found in the cytoplasm. It carries out the reaction an N-(omega-hydroxy-ultra-long chain fatty acyl)-sphingoid base + a (9Z,12Z)-octadecadienoyl-containing triacyl-sn-glycerol = an N-[omega-(9Z,12Z-octadecadienoyloxy)-O-ultra-long chain fatty acyl]-sphingoid base + a diacylglycerol. The catalysed reaction is an N-(omega-hydroxy-ultra-long chain fatty acyl)-sphing-4-enine + a (9Z,12Z)-octadecadienoyl-containing triacyl-sn-glycerol = an N-(omega-(9Z,12Z-octadecadienoyloxy)-ultra-long chain fatty acyl)-sphing-4-enine + a diacylglycerol. It catalyses the reaction N-(28-hydroxyoctacosanoyl)-sphing-4-enine + a (9Z,12Z)-octadecadienoyl-containing triacyl-sn-glycerol = N-(28-(9Z,12Z-octadecadienoyloxy)-octacosanoyl)-sphing-4-enine + a diacylglycerol. The enzyme catalyses N-(30-hydroxytriacontanoyl)-sphing-4-enine + 1,2,3-tri-(9Z,12Z)-octadecadienoylglycerol = N-[30-(9Z,12Z-octadecadienoyloxy)-triacontanoyl]-sphing-4-enine + di-(9Z,12Z)-octadecadienoylglycerol. It carries out the reaction N-(32-hydroxydotriacontanoyl)-sphing-4-enine + a (9Z,12Z)-octadecadienoyl-containing triacyl-sn-glycerol = N-(32-(9Z,12Z-octadecadienoyloxy)-dotricontanoyl)-sphing-4-enine + a diacylglycerol. The catalysed reaction is N-(32-hydroxydotriacontenoyl)-sphing-4-enine + a (9Z,12Z)-octadecadienoyl-containing triacyl-sn-glycerol = an N-(32-(9Z,12Z-octadecadienoyloxy)-dotriacontenoyl)-sphing-4-enine + a diacylglycerol. It catalyses the reaction an N-(34-hydroxytetratriacontenoyl)-sphing-4-enine + a (9Z,12Z)-octadecadienoyl-containing triacyl-sn-glycerol = an N-(34-(9Z,12Z-octadecadienoyloxy)-tetratriacontenoyl)-sphing-4-enine + a diacylglycerol. The enzyme catalyses an N-(34-hydroxytetratriacontadienoyl)-sphing-4-enine + a (9Z,12Z)-octadecadienoyl-containing triacyl-sn-glycerol = an N-(34-(9Z,12Z-octadecadienoyloxy)-tetratriacontadienoyl)-sphing-4-enine + a diacylglycerol. It carries out the reaction an N-(36-hydroxyhexatriacontenoyl)-sphing-4-enine + a (9Z,12Z)-octadecadienoyl-containing triacyl-sn-glycerol = an N-(36-(9Z,12Z-octadecadienoyloxy)-hexatriacontenoyl)-sphing-4-enine + a diacylglycerol. The catalysed reaction is an N-(36-hydroxyhexatriacontadienoyl)-sphing-4-enine + a (9Z,12Z)-octadecadienoyl-containing triacyl-sn-glycerol = an N-(36-(9Z,12Z-octadecadienoyloxy)-hexatriacontadienoyl)-sphing-4-enine + a diacylglycerol. It catalyses the reaction an N-(38-hydroxyoctatriacontenoyl)-sphing-4-enine + a (9Z,12Z)-octadecadienoyl-containing triacyl-sn-glycerol = an N-(38-(9Z,12Z-octadecadienoyloxy)-octatriacontenoyl)-sphing-4-enine + a diacylglycerol. In terms of biological role, omega-hydroxyceramide transacylase involved in the synthesis of omega-O-acylceramides (esterified omega-hydroxyacyl-sphingosine; EOS), which are extremely hydrophobic lipids involved in skin barrier formation. Catalyzes the last step of the synthesis of omega-O-acylceramides by transferring linoleic acid from triglycerides to an omega-hydroxyceramide. Omega-O-acylceramides, are required for the biogenesis of lipid lamellae in the stratum corneum and the formation of the cornified lipid envelope which are essential for the epidermis barrier function. These lipids also play a role in keratinocyte differentiation. May also act on omega-hydroxylated ultra-long chain fatty acids (omega-OH ULCFA) and acylglucosylceramides (GlcEOS). In Mus musculus (Mouse), this protein is Omega-hydroxyceramide transacylase.